Here is a 1318-residue protein sequence, read N- to C-terminus: Major tegument protein (1318 aa).

This sequence belongs to the herpesviridae MTP family. Interacts with host DAXX; this interaction disrupts the chromatin remodeling complex ATRX:DAXX and thus allows viral transcription. Interacts with host SMC6; this interaction targets SMC5-SMC6 complex for proteasomal degradation.

It is found in the virion tegument. It localises to the host nucleus. Functionally, tegument protein that plays a role in the inhibition of host intrinsic defenses to promote viral early gene activation. Interacts with host DAXX and thereby disrupts the complex between DAXX and ATRX. Suppresses the DAXX-ATRX dependent deposition of histone H3.3 on viral chromatin allowing viral transcription. Targets also host SMC5/6 for proteasomal degradation in a CUL7 and calpain-dependent manner to support nuclear membrane-less replication compartment formation and lytic virus replication. The sequence is that of Major tegument protein from Homo sapiens (Human).